The sequence spans 95 residues: Pyrimidine/purine nucleoside phosphorylase (95 aa).

It belongs to the nucleoside phosphorylase PpnP family.

It carries out the reaction a purine D-ribonucleoside + phosphate = a purine nucleobase + alpha-D-ribose 1-phosphate. It catalyses the reaction adenosine + phosphate = alpha-D-ribose 1-phosphate + adenine. The catalysed reaction is cytidine + phosphate = cytosine + alpha-D-ribose 1-phosphate. The enzyme catalyses guanosine + phosphate = alpha-D-ribose 1-phosphate + guanine. It carries out the reaction inosine + phosphate = alpha-D-ribose 1-phosphate + hypoxanthine. It catalyses the reaction thymidine + phosphate = 2-deoxy-alpha-D-ribose 1-phosphate + thymine. The catalysed reaction is uridine + phosphate = alpha-D-ribose 1-phosphate + uracil. The enzyme catalyses xanthosine + phosphate = alpha-D-ribose 1-phosphate + xanthine. In terms of biological role, catalyzes the phosphorolysis of diverse nucleosides, yielding D-ribose 1-phosphate and the respective free bases. Can use uridine, adenosine, guanosine, cytidine, thymidine, inosine and xanthosine as substrates. Also catalyzes the reverse reactions. In Enterobacter sp. (strain 638), this protein is Pyrimidine/purine nucleoside phosphorylase.